The following is a 346-amino-acid chain: Coproporphyrin III ferrochelatase (346 aa).

Fe-coproporphyrin III is bound by residues Ser52 and Tyr121. Residues His181 and Glu264 each contribute to the Fe(2+) site.

This sequence belongs to the ferrochelatase family.

It localises to the cytoplasm. It carries out the reaction Fe-coproporphyrin III + 2 H(+) = coproporphyrin III + Fe(2+). It functions in the pathway porphyrin-containing compound metabolism; protoheme biosynthesis. Involved in coproporphyrin-dependent heme b biosynthesis. Catalyzes the insertion of ferrous iron into coproporphyrin III to form Fe-coproporphyrin III. In Mycobacterium sp. (strain KMS), this protein is Coproporphyrin III ferrochelatase.